Here is a 581-residue protein sequence, read N- to C-terminus: MEPDGYVEELPGTILIYKENQYAASEHSVLKKDGDIVLQPQPSDDPNDPLNWNKFRKNWHLVLICLVSLVTGAIANDAGSAQDQMNAELGISYDAMDNAAGVLFICVGYFTYLAMPATFLYGRRCVYLVCLLFGMLGSMWFALVKTTSNSIGNQAFIGISEACAEALTQFSVSEVFFEHERGIKIGIYILSTSVGTYLGPLAAGYIASSQGWRWIGWWGLIISGITFVLFLFTFEETTFDRAAAIDRKQIQISNDQLTVKEDFDLKDMQSDIKPDVEKSDAMDDSKMKVDYTVNEISNAVQPIYSKPSYWKRIALITPANSLSGIGFRQYIMRLFQTLRIFLFPAVLYSGLQWGAQDAWLSFYLTTEEEDWMEAPYNYGDNAVAIMNVPCIIGATIGCIYGGYFGDYFTLWAAKRNNGIKEAESRLWLMILPCIINPIGLFMFGIGTARHWHWGPTYVGLGFIGFGWGCAGDISMAYLMDAYPGMVLEAMVGVSVINNTFGYVFTFACQSWIDSLGTERTYISIGVLCFIFIATSFPMILCGKRLRKWTAKQYYTFLNVRNRLDEKIPDQDRRGQDGVESR.

A Phosphoserine modification is found at serine 28. 11 helical membrane-spanning segments follow: residues 61–81 (LVLI…AGSA), 100–120 (AGVL…ATFL), 125–145 (CVYL…ALVK), 187–207 (IYIL…GYIA), 214–234 (WIGW…LFTF), 340–360 (IFLF…DAWL), 382–402 (AVAI…IYGG), 426–446 (LWLM…FGIG), 458–478 (VGLG…MAYL), 486–506 (VLEA…VFTF), and 522–542 (ISIG…ILCG).

The protein belongs to the major facilitator superfamily.

The protein resides in the cytoplasm. It localises to the cell cortex. The protein localises to the membrane. This is an uncharacterized protein from Schizosaccharomyces pombe (strain 972 / ATCC 24843) (Fission yeast).